Here is a 143-residue protein sequence, read N- to C-terminus: Sec-independent protein translocase protein TatB (143 aa).

A helical transmembrane segment spans residues 2–22 (FGNIGWGEFMVLLVAALVILG). Residues 97-143 (FDKPGSVSFDKSNPGTKAVSADPSTPTAPQNKPLAAGERPPIDLDAT) are disordered.

The protein belongs to the TatB family. The Tat system comprises two distinct complexes: a TatABC complex, containing multiple copies of TatA, TatB and TatC subunits, and a separate TatA complex, containing only TatA subunits. Substrates initially bind to the TatABC complex, which probably triggers association of the separate TatA complex to form the active translocon.

Its subcellular location is the cell membrane. Part of the twin-arginine translocation (Tat) system that transports large folded proteins containing a characteristic twin-arginine motif in their signal peptide across membranes. Together with TatC, TatB is part of a receptor directly interacting with Tat signal peptides. TatB may form an oligomeric binding site that transiently accommodates folded Tat precursor proteins before their translocation. The sequence is that of Sec-independent protein translocase protein TatB from Rhodococcus opacus (strain B4).